Reading from the N-terminus, the 359-residue chain is Cinnamyl alcohol dehydrogenase 8 (359 aa).

Residue Cys46 coordinates Zn(2+). Position 48 (Ser48) interacts with NADP(+). The Zn(2+) site is built by His68, Glu69, Cys99, Cys102, Cys105, Cys113, and Cys162. Residues Thr166, 187-192, 210-215, Thr250, Gly274, and 297-299 contribute to the NADP(+) site; these read GLGGLG, STSEKK, and SMI.

The protein belongs to the zinc-containing alcohol dehydrogenase family. In terms of assembly, homodimer. Zn(2+) serves as cofactor. As to expression, expressed in the differentiation and elongation zones of primary and lateral roots. Expressed in the hypocotyl, cotyledon veins, vasculature of the first rosette leaves, hydathodes and trichomes. In stems, expressed in the vascular cambium and developing xylem tissues. Expressed in the style, anthers, stamen filaments, stigmatic regions in flowers, and abscission and style regions of siliques.

The catalysed reaction is (E)-cinnamyl alcohol + NADP(+) = (E)-cinnamaldehyde + NADPH + H(+). It participates in aromatic compound metabolism; phenylpropanoid biosynthesis. Its function is as follows. Involved in lignin biosynthesis. Catalyzes the final step specific for the production of lignin monomers. Catalyzes the NADPH-dependent reduction of coniferaldehyde, 5-hydroxyconiferaldehyde, sinapaldehyde, 4-coumaraldehyde and caffeyl aldehyde to their respective alcohols. In Arabidopsis thaliana (Mouse-ear cress), this protein is Cinnamyl alcohol dehydrogenase 8 (CAD8).